The primary structure comprises 244 residues: 1-(5-phosphoribosyl)-5-[(5-phosphoribosylamino)methylideneamino] imidazole-4-carboxamide isomerase (244 aa).

The Proton acceptor role is filled by D8. Catalysis depends on D129, which acts as the Proton donor.

Belongs to the HisA/HisF family.

It localises to the cytoplasm. It carries out the reaction 1-(5-phospho-beta-D-ribosyl)-5-[(5-phospho-beta-D-ribosylamino)methylideneamino]imidazole-4-carboxamide = 5-[(5-phospho-1-deoxy-D-ribulos-1-ylimino)methylamino]-1-(5-phospho-beta-D-ribosyl)imidazole-4-carboxamide. Its pathway is amino-acid biosynthesis; L-histidine biosynthesis; L-histidine from 5-phospho-alpha-D-ribose 1-diphosphate: step 4/9. The protein is 1-(5-phosphoribosyl)-5-[(5-phosphoribosylamino)methylideneamino] imidazole-4-carboxamide isomerase of Maricaulis maris (strain MCS10) (Caulobacter maris).